A 378-amino-acid chain; its full sequence is Glutamate 5-kinase (378 aa).

An ATP-binding site is contributed by lysine 19. 3 residues coordinate substrate: serine 59, aspartate 146, and asparagine 158. 178 to 179 (TD) contacts ATP. The PUA domain maps to 285–363 (RGSVTVDPGA…SEFEKLLGYT (79 aa)).

It belongs to the glutamate 5-kinase family.

Its subcellular location is the cytoplasm. It catalyses the reaction L-glutamate + ATP = L-glutamyl 5-phosphate + ADP. It functions in the pathway amino-acid biosynthesis; L-proline biosynthesis; L-glutamate 5-semialdehyde from L-glutamate: step 1/2. Functionally, catalyzes the transfer of a phosphate group to glutamate to form L-glutamate 5-phosphate. This is Glutamate 5-kinase from Polaromonas naphthalenivorans (strain CJ2).